The primary structure comprises 605 residues: DNA mismatch repair protein MutL (605 aa).

It belongs to the DNA mismatch repair MutL/HexB family.

Functionally, this protein is involved in the repair of mismatches in DNA. It is required for dam-dependent methyl-directed DNA mismatch repair. May act as a 'molecular matchmaker', a protein that promotes the formation of a stable complex between two or more DNA-binding proteins in an ATP-dependent manner without itself being part of a final effector complex. The polypeptide is DNA mismatch repair protein MutL (Methylocella silvestris (strain DSM 15510 / CIP 108128 / LMG 27833 / NCIMB 13906 / BL2)).